A 141-amino-acid polypeptide reads, in one-letter code: Nucleoside diphosphate kinase (141 aa).

Residues K11, F59, R87, T93, R104, and N114 each coordinate ATP. H117 functions as the Pros-phosphohistidine intermediate in the catalytic mechanism.

The protein belongs to the NDK family. As to quaternary structure, homotetramer. It depends on Mg(2+) as a cofactor.

It is found in the cytoplasm. It catalyses the reaction a 2'-deoxyribonucleoside 5'-diphosphate + ATP = a 2'-deoxyribonucleoside 5'-triphosphate + ADP. The catalysed reaction is a ribonucleoside 5'-diphosphate + ATP = a ribonucleoside 5'-triphosphate + ADP. Functionally, major role in the synthesis of nucleoside triphosphates other than ATP. The ATP gamma phosphate is transferred to the NDP beta phosphate via a ping-pong mechanism, using a phosphorylated active-site intermediate. This chain is Nucleoside diphosphate kinase, found in Pseudomonas fluorescens (strain SBW25).